A 329-amino-acid polypeptide reads, in one-letter code: GTP 3',8-cyclase (329 aa).

The Radical SAM core domain maps to 8-234; sequence AFARKFYYLR…QQRARSDGPA (227 aa). Arg17 is a GTP binding site. Residues Cys24 and Cys28 each contribute to the [4Fe-4S] cluster site. Residue Tyr30 participates in S-adenosyl-L-methionine binding. Cys31 lines the [4Fe-4S] cluster pocket. A GTP-binding site is contributed by Arg68. An S-adenosyl-L-methionine-binding site is contributed by Gly72. Position 99 (Thr99) interacts with GTP. Residue Ser123 coordinates S-adenosyl-L-methionine. GTP is bound at residue Lys160. Met194 provides a ligand contact to S-adenosyl-L-methionine. Residues Cys257 and Cys260 each coordinate [4Fe-4S] cluster. 262-264 contributes to the GTP binding site; the sequence is RLR. A [4Fe-4S] cluster-binding site is contributed by Cys274.

This sequence belongs to the radical SAM superfamily. MoaA family. In terms of assembly, monomer and homodimer. The cofactor is [4Fe-4S] cluster.

It carries out the reaction GTP + AH2 + S-adenosyl-L-methionine = (8S)-3',8-cyclo-7,8-dihydroguanosine 5'-triphosphate + 5'-deoxyadenosine + L-methionine + A + H(+). It participates in cofactor biosynthesis; molybdopterin biosynthesis. Functionally, catalyzes the cyclization of GTP to (8S)-3',8-cyclo-7,8-dihydroguanosine 5'-triphosphate. This Pectobacterium atrosepticum (strain SCRI 1043 / ATCC BAA-672) (Erwinia carotovora subsp. atroseptica) protein is GTP 3',8-cyclase.